Reading from the N-terminus, the 270-residue chain is Probable septum site-determining protein MinC (270 aa).

Belongs to the MinC family. Interacts with MinD and FtsZ.

Functionally, cell division inhibitor that blocks the formation of polar Z ring septums. Rapidly oscillates between the poles of the cell to destabilize FtsZ filaments that have formed before they mature into polar Z rings. Prevents FtsZ polymerization. This Cupriavidus necator (strain ATCC 17699 / DSM 428 / KCTC 22496 / NCIMB 10442 / H16 / Stanier 337) (Ralstonia eutropha) protein is Probable septum site-determining protein MinC.